Reading from the N-terminus, the 210-residue chain is Fibroblast growth factor 21 (210 aa).

Residues 1–28 (MEWMRSRVGTLGLWVRLLLAVFLLGVYQ) form the signal peptide. Positions 144–210 (PLRLPQKDSP…LQGRSPSYAS (67 aa)) are disordered.

The protein belongs to the heparin-binding growth factors family. As to quaternary structure, interacts (via C-terminus) with KLB; this interaction is direct. Interacts with FGFR4. In terms of tissue distribution, most abundantly expressed in the liver, also expressed in the thymus at lower levels. Expressed in skeletal muscle (at protein level). Secreted in plasma (at protein level).

It is found in the secreted. Functionally, stimulates glucose uptake in differentiated adipocytes via the induction of glucose transporter SLC2A1/GLUT1 expression (but not SLC2A4/GLUT4 expression). Activity probably requires the presence of KLB. Regulates systemic glucose homeostasis and insulin sensitivity. This Mus musculus (Mouse) protein is Fibroblast growth factor 21 (Fgf21).